We begin with the raw amino-acid sequence, 428 residues long: Enolase (428 aa).

Glutamine 163 is a binding site for (2R)-2-phosphoglycerate. The Proton donor role is filled by glutamate 205. Aspartate 242, glutamate 285, and aspartate 312 together coordinate Mg(2+). (2R)-2-phosphoglycerate contacts are provided by lysine 337, arginine 366, serine 367, and lysine 388. Lysine 337 (proton acceptor) is an active-site residue.

Belongs to the enolase family. Mg(2+) is required as a cofactor.

The protein localises to the cytoplasm. It is found in the secreted. It localises to the cell surface. It catalyses the reaction (2R)-2-phosphoglycerate = phosphoenolpyruvate + H2O. It functions in the pathway carbohydrate degradation; glycolysis; pyruvate from D-glyceraldehyde 3-phosphate: step 4/5. Catalyzes the reversible conversion of 2-phosphoglycerate (2-PG) into phosphoenolpyruvate (PEP). It is essential for the degradation of carbohydrates via glycolysis. The protein is Enolase of Persephonella marina (strain DSM 14350 / EX-H1).